Consider the following 333-residue polypeptide: Phosphate acetyltransferase (333 aa).

This sequence belongs to the phosphate acetyltransferase and butyryltransferase family. Homodimer.

It is found in the cell membrane. The catalysed reaction is acetyl-CoA + phosphate = acetyl phosphate + CoA. Its pathway is metabolic intermediate biosynthesis; acetyl-CoA biosynthesis; acetyl-CoA from acetate: step 2/2. The protein is Phosphate acetyltransferase (pta) of Methanosarcina thermophila.